The chain runs to 130 residues: Small ribosomal subunit protein uS9 (130 aa).

The protein belongs to the universal ribosomal protein uS9 family.

In Bordetella pertussis (strain Tohama I / ATCC BAA-589 / NCTC 13251), this protein is Small ribosomal subunit protein uS9.